A 443-amino-acid polypeptide reads, in one-letter code: ATP-dependent protease ATPase subunit HslU (443 aa).

ATP-binding positions include Ile18, 60–65 (GVGKTE), Asp256, Glu321, and Arg393.

This sequence belongs to the ClpX chaperone family. HslU subfamily. A double ring-shaped homohexamer of HslV is capped on each side by a ring-shaped HslU homohexamer. The assembly of the HslU/HslV complex is dependent on binding of ATP.

Its subcellular location is the cytoplasm. ATPase subunit of a proteasome-like degradation complex; this subunit has chaperone activity. The binding of ATP and its subsequent hydrolysis by HslU are essential for unfolding of protein substrates subsequently hydrolyzed by HslV. HslU recognizes the N-terminal part of its protein substrates and unfolds these before they are guided to HslV for hydrolysis. In Shigella dysenteriae serotype 1 (strain Sd197), this protein is ATP-dependent protease ATPase subunit HslU.